The following is a 114-amino-acid chain: MRGVKIPELSKIMRELKTKELKKLLRYELDESTSVDSDEEQDDPGVPFYYEELEKCKTMKELYKFAREYDLQIPRIDKNDIFLKACKELNKNNIFDPNEDIIFEGVIIDPVVIG.

This is an uncharacterized protein from Sputnik virophage.